The primary structure comprises 74 residues: Protein SlyX homolog (74 aa).

The protein belongs to the SlyX family.

This is Protein SlyX homolog from Neisseria meningitidis serogroup C (strain 053442).